Consider the following 393-residue polypeptide: Short-chain dehydrogenase/reductase family 42E member 1 (393 aa).

The Proton acceptor role is filled by Tyr-152. Position 156 (Lys-156) interacts with NAD(+). Helical transmembrane passes span 282–302 (LPLTLVYCFAFLTEMVHFILG) and 371–391 (GLLVFLLIIAVLIWLPSSVIL).

Belongs to the 3-beta-HSD family.

It is found in the membrane. This is Short-chain dehydrogenase/reductase family 42E member 1 (SDR42E1) from Macaca fascicularis (Crab-eating macaque).